The sequence spans 1438 residues: MAMTEQQKFKVLADQIKISNQLDAEILNSGELTRIDVSNKNRTWEFHITLPQFLAHEDYLLFINAIEQEFKDIANVTCRFTVTNGTNQDEHAIKYFGHCIDQTALSPKVKGQLKQKKLIMSGKVLKVMVSNDIERNHFDKACNGSLIKAFRNCGFDIDKIIFETNDNDQEQNLASLEAHIQEEDEQSARLATEKLEKMKAEKSKQQDNNESAVDKCQIGKPIQIENIKPIESIIEEEYKVAIEGVIFDINLKELKSGRHIVEIKVTDYTDSLVLKMFTRKNKDDLEHFKALSVGKWVRAQGRIEEDTFIRDLVMMMSDIEEIKKATKKDKAEEKRVEFHLHTAMSQMDGIPNIGAYVKQAADWGHPAIAVTDHNVVQAFPDAHAAAEKHGIKMIYGMEGMLVDDGVPIAYKPQDVVLKDATYVVFDVETTGLSNQYDKIIELAAVKVHNGEIIDKFERFSNPHERLSETIINLTHITDDMLVDAPEIEEVLTEFKEWVGDAIFVAHNASFDMGFIDTGYERLGFGPSTNGVIDTLELSRTINTEYGKHGLNFLAKKYGVELTQHHRAIYDTEATAYIFIKMVQQMKELGVLNHNEINKKLSNEDAYKRARPSHVTLIVQNQQGLKNLFKIVSASLVKYFYRTPRIPRSLLDEYREGLLVGTACDEGELFTAVMQKDQSQVEKIAKYYDFIEIQPPALYQDLIDRELIRDTETLHEIYQRLIHAGDTAGIPVIATGNAHYLFEHDGIARKILIASQPGNPLNRSTLPEAHFRTTDEMLNEFHFLGEEKAHEIVVKNTNELADRIERVVPIKDELYTPRMEGANEEIRELSYANARKLYGEDLPQIVIDRLEKELKSIIGNGFAVIYLISQRLVKKSLDDGYLVGSRGSVGSSFVATMTEITEVNPLPPHYICPNCKTSEFFNDGSVGSGFDLPDKTCETCGAPLIKEGQDIPFETFLGFKGDKVPDIDLNFSGEYQPNAHNYTKVLFGEDKVFRAGTIGTVAEKTAFGYVKGYLNDQGIHKRGAEIDRLVKGCTGVKRTTGQHPGGIIVVPDYMDIYDFTPIQYPADDQNSAWMTTHFDFHSIHDNVLKLDILGHDDPTMIRMLQDLSGIDPKTIPVDDKEVMQIFSTPESLGVTEDEILCKTGTFGVPEFGTGFVRQMLEDTKPTTFSELVQISGLSHGTDVWLGNAQELIKTGICDLSSVIGCRDDIMVYLMYAGLEPSMAFKIMESVRKGKGLTEEMIETMKENEVPDWYLDSCLKIKYMFPKAHAAAYVLMAVRIAYFKVHHPLYYYASYFTIRASDFDLITMIKDKTSIRNTVKDMYSRYMDLGKKEKDVLTVLEIMNEMAHRGYRMQPISLEKSQAFEFIIEGETLIPPFISVPGLGENVAKRIVEARDDGPFLSKEDLNKKAGLSQKIIEYLDELGSLPNLPDKAQLSIFDM.

An Exonuclease domain is found at tyrosine 422–phenylalanine 578.

The protein belongs to the DNA polymerase type-C family. PolC subfamily.

The protein localises to the cytoplasm. It carries out the reaction DNA(n) + a 2'-deoxyribonucleoside 5'-triphosphate = DNA(n+1) + diphosphate. Its function is as follows. Required for replicative DNA synthesis. This DNA polymerase also exhibits 3' to 5' exonuclease activity. The chain is DNA polymerase III PolC-type from Staphylococcus aureus (strain MRSA252).